The sequence spans 182 residues: Protein Syd (182 aa).

The protein belongs to the Syd family.

Its subcellular location is the cell inner membrane. In terms of biological role, interacts with the SecY protein in vivo. May bind preferentially to an uncomplexed state of SecY, thus functioning either as a chelating agent for excess SecY in the cell or as a regulatory factor that negatively controls the translocase function. This chain is Protein Syd, found in Pectobacterium atrosepticum (strain SCRI 1043 / ATCC BAA-672) (Erwinia carotovora subsp. atroseptica).